A 703-amino-acid chain; its full sequence is uncharacterized protein (703 aa).

The first 23 residues, M1–A23, serve as a signal peptide directing secretion. The helical transmembrane segment at M673–V693 threads the bilayer.

The protein localises to the cell membrane. This is an uncharacterized protein from Bacillus subtilis (strain 168).